The primary structure comprises 225 residues: Immune-associated nucleotide-binding protein 1 (225 aa).

Residues 6–214 (CPVTNLLLLG…YTENMHRKIK (209 aa)) enclose the AIG1-type G domain. Residues 15–22 (GRSENGKS) form a G1 region. 15–23 (GRSENGKSS) lines the GTP pocket. The interval 42 to 46 (DMDQR) is G2. Residues 64-67 (DTPG) form a G3 region. A G4 region spans residues 134 to 137 (TGGD). Positions 173 to 175 (NNK) are G5. Residue Asn-174 coordinates GTP.

The protein belongs to the TRAFAC class TrmE-Era-EngA-EngB-Septin-like GTPase superfamily. AIG1/Toc34/Toc159-like paraseptin GTPase family. IAN subfamily. Mostly expressed in pollen.

The polypeptide is Immune-associated nucleotide-binding protein 1 (Arabidopsis thaliana (Mouse-ear cress)).